Reading from the N-terminus, the 408-residue chain is Putative UPF0496 protein 2 (408 aa).

The next 2 membrane-spanning stretches (helical) occupy residues 224–244 (RIAR…AIVA) and 252–272 (ALVG…GAAR). The tract at residues 385-408 (MARGLPPPSPATVTTTSEERLTSS) is disordered.

This sequence belongs to the UPF0496 family.

The protein resides in the membrane. The protein is Putative UPF0496 protein 2 of Oryza sativa subsp. japonica (Rice).